We begin with the raw amino-acid sequence, 384 residues long: Transcriptional regulator of the unfolded protein response hacA (384 aa).

Residues 1–18 show a composition bias toward polar residues; the sequence is MTESTFAVETFSMDSMSP. Disordered stretches follow at residues 1 to 27 and 41 to 94; these read MTESTFAVETFSMDSMSPSPGAEIPRL and LVPE…QRRI. A compositionally biased stretch (basic and acidic residues) spans 84–94; the sequence is KTEDEKEQRRI. One can recognise a bZIP domain in the interval 90–153; it reads EQRRIERVLR…NRLSQQVAKL (64 aa). The basic motif stretch occupies residues 92-101; that stretch reads RRIERVLRNR. Residues 106–113 are leucine-zipper; the sequence is ISRERKRL. Disordered regions lie at residues 208–256 and 331–384; these read SIPF…PSDL and PDED…AGAQ. Residues 218–240 are compositionally biased toward low complexity; it reads STTTTTTTTTTTSNNISSTSSTT.

It belongs to the bZIP family.

It localises to the nucleus. In terms of biological role, master transcriptional regulator of the unfolded protein response (UPR) that recognizes and binds to the UPR element (UPRE) in the promoter of UPR-regulated genes. Exposure to antifungals and ER-stressing agents initiates the activation of hacA which occurs when a 20 nucleotide fragment is removed from part of the exon-2 and part of intron-2, which in turn promotes the arisen of the DNA binding site motif and a dimer interface domain. Modulates the expression of genes related to cell wall synthesis, ergosterol biosynthesis, pigmentation, heat shock proteins, and the genes coding for mannosyltransferase enzymes. Plays a key role in both response to stress and host-pathogen interaction. This is Transcriptional regulator of the unfolded protein response hacA from Trichophyton rubrum (strain ATCC MYA-4607 / CBS 118892) (Athlete's foot fungus).